The primary structure comprises 471 residues: Putative multidrug resistance protein MdtD (471 aa).

The next 13 helical transmembrane spans lie at 12–32 (LWIV…VNTA), 49–69 (MVIV…GWLA), 77–97 (IFFT…QSST), 106–126 (VLQG…VMKI), 138–158 (FVTL…GLLV), 165–185 (WIFL…LWLM), 197–217 (FSGF…LDGY), 225–245 (AGLG…LWHA), 263–285 (FSLG…FMTP), 290–312 (IGLG…GSMG), 342–362 (LLFM…VMLF), 396–416 (MVMQ…LGAF), and 431–451 (IFFW…LVFA).

The protein belongs to the major facilitator superfamily. TCR/Tet family.

It is found in the cell inner membrane. This is Putative multidrug resistance protein MdtD from Cronobacter sakazakii (strain ATCC BAA-894) (Enterobacter sakazakii).